The following is a 92-amino-acid chain: UPF0250 protein PD_0532 (92 aa).

It belongs to the UPF0250 family.

In Xylella fastidiosa (strain Temecula1 / ATCC 700964), this protein is UPF0250 protein PD_0532.